We begin with the raw amino-acid sequence, 365 residues long: Probable flavin mononucleotide-dependent alkene reductase (365 aa).

FMN-binding positions include 30–32, Ala63, and Gln105; that span reads PLT. The Proton donor role is filled by Tyr191. FMN contacts are provided by residues Arg238, Ser303, and 324–325; that span reads GT.

It belongs to the NADH:flavin oxidoreductase/NADH oxidase family. Monomer. FMN is required as a cofactor.

The protein resides in the cytoplasm. The protein localises to the cytosol. May function as a flavin mononucleotide (FMN)-dependent alkene reductase on substrates carrying alpha,beta-unsaturated carbonyl groups (ketones, aldehydes, carboxylic acids, esters, lactones or cyclic imides). The catalysis depends on NAD(P)H, which acts as a hydride donor for the reduction. Seems to be involved in metabolic pathways required for efficient replication of amastigotes within macrophages. Its function is as follows. Acts as a FMN-dependent nitroreductase that activates anti-leishmanial bicyclic nitroaromatic prodrugs including delamanid, DNDI-VL-2098 and (R)-PA-824, forming toxic products that kill the parasites. The sequence is that of Probable flavin mononucleotide-dependent alkene reductase from Leishmania infantum.